The primary structure comprises 268 residues: Phosphate import ATP-binding protein PstB (268 aa).

In terms of domain architecture, ABC transporter spans 22-263 (LAVRNLNFYY…PKQQQTQDYI (242 aa)). 54 to 61 (GPSGCGKS) serves as a coordination point for ATP.

This sequence belongs to the ABC transporter superfamily. Phosphate importer (TC 3.A.1.7) family. The complex is composed of two ATP-binding proteins (PstB), two transmembrane proteins (PstC and PstA) and a solute-binding protein (PstS).

It is found in the cell inner membrane. The catalysed reaction is phosphate(out) + ATP + H2O = ADP + 2 phosphate(in) + H(+). Its function is as follows. Part of the ABC transporter complex PstSACB involved in phosphate import. Responsible for energy coupling to the transport system. This chain is Phosphate import ATP-binding protein PstB, found in Gluconobacter oxydans (strain 621H) (Gluconobacter suboxydans).